The chain runs to 143 residues: Holo-[acyl-carrier-protein] synthase (143 aa).

The Mg(2+) site is built by aspartate 9 and glutamate 63.

This sequence belongs to the P-Pant transferase superfamily. AcpS family. Mg(2+) is required as a cofactor.

It localises to the cytoplasm. The enzyme catalyses apo-[ACP] + CoA = holo-[ACP] + adenosine 3',5'-bisphosphate + H(+). Functionally, transfers the 4'-phosphopantetheine moiety from coenzyme A to a Ser of acyl-carrier-protein. The polypeptide is Holo-[acyl-carrier-protein] synthase (Burkholderia mallei (strain NCTC 10247)).